The following is a 404-amino-acid chain: Multidrug resistance protein MdtG (404 aa).

11 helical membrane passes run 19–39 (LGCFLTGAAFSLVMPFLPLYV), 56–76 (LVFSITFLFSAIASPFWGGLA), 90–110 (LGMAIVMLLMGMAQNIWQFLI), 113–133 (ALLGLLGGFIPNANALIATQV), 144–164 (TLSTGGVSGALLGPLAGGLLA), 171–191 (PVFFITASVLFICFLLTFFFI), 222–242 (LFVTTLIIQVATGSIAPILTL), 254–274 (IAFISGMIASVPGVAALLSAP), 288–308 (ILIVALIISVLLLIPMSFVQT), 317–337 (FLLGAADGALLPAVQTLLVYN), and 376–396 (AVFCVTAGVVLFNAIYSWNSL).

It belongs to the major facilitator superfamily. DHA1 family. MdtG (TC 2.A.1.2.20) subfamily.

The protein resides in the cell inner membrane. This Salmonella schwarzengrund (strain CVM19633) protein is Multidrug resistance protein MdtG.